The sequence spans 527 residues: Putative zinc finger CCCH domain-containing protein 64 (527 aa).

A disordered region spans residues 103-127; sequence GQLRSTQTTSKRKAASRKGQREQRV. The C3H1-type zinc-finger motif lies at 213–241; sequence RPGEPFCRYYMKFGECKHMTFCKYNHPKD.

This Oryza sativa subsp. japonica (Rice) protein is Putative zinc finger CCCH domain-containing protein 64.